A 472-amino-acid chain; its full sequence is MSCCIANAIRWDVSLLIHRSMSSSMSSVQPTSPVSDSPSLGEMHASVAVSRRGHWGFRLLAFLGPGYMVSVGYMDPGNWATGLAGGSRFGYMLLSVILLSNVMAIVLQALAARLGIASDMDLAQACRARYSRGTNLALWAVCELAIIACDLAEVIGTAIALNLLLGVPIILGAVITAVDVVLVLLLMHRGFRALEAFVIALLLVIFGCFVVQIVLAAPPLQEVLGGFVPRWQVVADPQALYLAIGIVGATVMPHNLYLHSSIVQTRAYPRTPVGRRSALRWAVADSTLALMLALFINASILILAAAVFHAQHHFDVEEIEQAYQLLAPVLGVGVAATLFATALLASGINSTVTATLAGQIVMEGFLRLRLRPWLRRVLTRGLAIVPVIVVVALYGEQGTGRLLLLSQVILSMQLPFAVIPLLRCVADRKVMGALVAPRWLMVVAWLIAGVIVVLNVKLLGDYAVHLMVGVSD.

Helical transmembrane passes span 59 to 79 (LLAF…PGNW), 92 to 112 (MLLS…ALAA), 144 to 164 (LAII…LNLL), 167 to 187 (VPII…LLLM), 196 to 216 (AFVI…IVLA), 233 to 253 (VVAD…TVMP), 288 to 308 (LALM…AAVF), 325 to 345 (LLAP…ALLA), 377 to 397 (VLTR…YGEQ), 402 to 422 (LLLL…IPLL), and 439 to 459 (WLMV…VKLL).

The protein belongs to the NRAMP family.

It is found in the cell inner membrane. Functionally, h(+)-stimulated, divalent metal cation uptake system. The polypeptide is Divalent metal cation transporter MntH (Xylella fastidiosa (strain Temecula1 / ATCC 700964)).